The chain runs to 252 residues: uncharacterized protein (252 aa).

Residues 80–100 form a helical membrane-spanning segment; the sequence is LSVLVIGSTMFTHAGVLPVLA.

The protein resides in the host membrane. It localises to the virion. This is an uncharacterized protein from Acanthamoeba polyphaga mimivirus (APMV).